We begin with the raw amino-acid sequence, 574 residues long: FAD-linked oxidoreductase penH (574 aa).

Positions 1-25 are cleaved as a signal peptide; that stretch reads MLPRALTLSALLALLLAIYLALAPA. Asparagine 48, asparagine 107, asparagine 193, asparagine 368, and asparagine 385 each carry an N-linked (GlcNAc...) asparagine glycan. Residues 121-305 form the FAD-binding PCMH-type domain; the sequence is HQGRIPLYAA…VRVTMRTYPD (185 aa).

Belongs to the oxygen-dependent FAD-linked oxidoreductase family. FAD is required as a cofactor.

The catalysed reaction is peniprequinolone + A = yaequinolone E + AH2. It participates in secondary metabolite biosynthesis. The protein operates within alkaloid biosynthesis. It functions in the pathway mycotoxin biosynthesis. Functionally, FAD-linked oxidoreductase; part of the gene cluster that mediates the biosynthesis of penigequinolones, potent insecticidal alkaloids that contain a highly modified 10-carbon prenyl group. The first stage is catalyzed by the nonribosomal peptide synthetase penN that condenses anthranilic acid and O-methyl-L-tyrosine to produce 4'-methoxycyclopeptin. 4'-methoxycyclopeptin is then converted to 4'-methoxydehydrocyclopeptin by the ketoglutarate-dependent dioxygenase penM through dehydrogenation to form a double bond between C-alpha and C-beta of the O-methyltyrosine side chain. PenM also converts its first product methoxydehydrocyclopeptin to 4'-methoxycyclopenin. The following conversion of 4'methoxycyclopenin into 4'-methoxyviridicatin is catalyzed by the cyclopenase penL. 4'-methoxyviridicatin is the precursor of quinolone natural products, and is further converted to quinolinone B. The prenyltransferase penI then catalyzes the canonical Friedel-Crafts alkylation of quinolinone B with dimethylallyl cation to yield dimethylallyl quinolone, which is subjected to FAD-dependent dehydrogenation by the FAD-linked oxidoreductase penH to yield conjugated aryl diene. The delta(3') double bond then serves as the site of the second alkylation with DMAPP catalyzed by the prenyltransferase penG to yield a carbenium ion intermediate, which can be attacked by H(2)O to yield a styrenyl quinolone containing a C3'-hydroxyprenyl chain, or undergo cyclization to yield yaequinolones J1 and J2. The conversion of the styrenyl quinolone into the tetrahydrofuran-containing yaequinolone C is performed by the FAD-dependent monooxygenase penE and involves epoxidation of the terminal C7'-C8' olefin, followed by epoxide ring opening initiated by the C3' hydroxyl group. The predicted cysteine hydrolase penJ acts as an epoxide hydrolase that enhances the rate of the 5-exo-tet cyclization step, increasing the yield of yaequinolone C. PenF catalyzes the cationic rearrangement of the epoxide formed by penE (before ring opening to produce yaequinolone C) into yaequinolone D. Finally, the short-chain dehydrogenase/reductase (SDR)-like reductase penD, catalyzes both the dehydration of yaequinolone D and the reduction of the resulting oxonium to yield penigequinolone. This Penicillium thymicola protein is FAD-linked oxidoreductase penH.